The chain runs to 105 residues: Putative ferredoxin-3 (105 aa).

2 4Fe-4S ferredoxin-type domains span residues Y17–I46 and T70–A100. 8 residues coordinate [4Fe-4S] cluster: C26, C29, C32, C36, C80, C83, C86, and C90.

[4Fe-4S] cluster serves as cofactor.

Its function is as follows. Ferredoxins are iron-sulfur proteins that transfer electrons in a wide variety of metabolic reactions. The protein is Putative ferredoxin-3 (fdxB) of Sinorhizobium fredii (strain NBRC 101917 / NGR234).